Here is a 101-residue protein sequence, read N- to C-terminus: Urease subunit beta (101 aa).

This sequence belongs to the urease beta subunit family. Heterotrimer of UreA (gamma), UreB (beta) and UreC (alpha) subunits. Three heterotrimers associate to form the active enzyme.

The protein resides in the cytoplasm. It carries out the reaction urea + 2 H2O + H(+) = hydrogencarbonate + 2 NH4(+). Its pathway is nitrogen metabolism; urea degradation; CO(2) and NH(3) from urea (urease route): step 1/1. In Chelativorans sp. (strain BNC1), this protein is Urease subunit beta.